We begin with the raw amino-acid sequence, 224 residues long: UPF0758 protein Psyr_0222 (224 aa).

The MPN domain occupies 102-224 (ALENPTQVRS…PLSMVERGLM (123 aa)). 3 residues coordinate Zn(2+): H173, H175, and D186. A JAMM motif motif is present at residues 173 to 186 (HNHPSGITTPSRSD).

It belongs to the UPF0758 family.

This is UPF0758 protein Psyr_0222 from Pseudomonas syringae pv. syringae (strain B728a).